Here is a 170-residue protein sequence, read N- to C-terminus: MARVEL domain-containing protein 1 (170 aa).

The Cytoplasmic portion of the chain corresponds to 1 to 38 (MEGERPRSDTVTTTVSSHMETISLGGSIAYDRSFLRSP). An MARVEL domain is found at 34-167 (FLRSPTGVLL…STYFSFQAWR (134 aa)). A helical membrane pass occupies residues 39 to 59 (TGVLLLMEIMFGLLVWALIAG). The Extracellular segment spans residues 60–67 (SEYFLFSA). A helical membrane pass occupies residues 68–88 (FGWVMFVAVFYWVLSVFFFLL). Topologically, residues 89 to 102 (HLTRANTRITKVPW) are cytoplasmic. Residues 103–123 (SLVGLCFNGSAFVLYLIAAVV) traverse the membrane as a helical segment. Over 124–145 (EASSVNKDVHQHHNYNSWTASS) the chain is Extracellular. The helical transmembrane segment at 146–166 (FFAFIVTVCYALSTYFSFQAW) threads the bilayer. Residues 167 to 170 (RTKS) lie on the Cytoplasmic side of the membrane.

The protein localises to the membrane. It localises to the nucleus. This is MARVEL domain-containing protein 1 (marveld1) from Xenopus laevis (African clawed frog).